We begin with the raw amino-acid sequence, 264 residues long: Hydroxyethylthiazole kinase (264 aa).

Met55 is a substrate binding site. ATP is bound by residues Arg130 and Ser176. Gly203 is a binding site for substrate.

Belongs to the Thz kinase family. The cofactor is Mg(2+).

It carries out the reaction 5-(2-hydroxyethyl)-4-methylthiazole + ATP = 4-methyl-5-(2-phosphooxyethyl)-thiazole + ADP + H(+). The protein operates within cofactor biosynthesis; thiamine diphosphate biosynthesis; 4-methyl-5-(2-phosphoethyl)-thiazole from 5-(2-hydroxyethyl)-4-methylthiazole: step 1/1. In terms of biological role, catalyzes the phosphorylation of the hydroxyl group of 4-methyl-5-beta-hydroxyethylthiazole (THZ). This chain is Hydroxyethylthiazole kinase, found in Leptospira borgpetersenii serovar Hardjo-bovis (strain JB197).